Reading from the N-terminus, the 890-residue chain is Agglutinin-like protein ARB_02240 (890 aa).

A signal peptide spans Met-1–Ala-20. Residues Asn-106, Asn-217, Asn-583, and Asn-654 are each glycosylated (N-linked (GlcNAc...) asparagine). The segment at Ile-680–Thr-872 is disordered. Low complexity-rich tracts occupy residues Thr-693 to Ser-753 and Thr-760 to Thr-790. Residues Gly-791–Pro-802 show a composition bias toward polar residues. 2 stretches are compositionally biased toward low complexity: residues Ser-803–Thr-812 and Ser-821–Thr-837. A compositionally biased stretch (gly residues) spans Thr-838–Thr-848. The GPI-anchor amidated glycine moiety is linked to residue Gly-864. Residues Ala-865–Ile-890 constitute a propeptide, removed in mature form.

It belongs to the ALS family. In terms of processing, the GPI-anchor is attached to the protein in the endoplasmic reticulum and serves to target the protein to the cell surface. There, the glucosamine-inositol phospholipid moiety is cleaved off and the GPI-modified mannoprotein is covalently attached via its lipidless GPI glycan remnant to the 1,6-beta-glucan of the outer cell wall layer.

Its subcellular location is the secreted. The protein localises to the cell membrane. The protein resides in the cell wall. Functionally, cell surface adhesion protein which mediates cell agglutination and host tissue adherence. This is Agglutinin-like protein ARB_02240 from Arthroderma benhamiae (strain ATCC MYA-4681 / CBS 112371) (Trichophyton mentagrophytes).